The sequence spans 207 residues: Abscisic acid receptor PYL9 (207 aa).

Residues 31 to 197 (FPPSTTTATT…NLQMLAAVAE (167 aa)) are START-like. Abscisate-binding positions include lysine 74, 104-109 (ASTSTE), 131-137 (RLRNYRS), and glutamate 162. The Gate loop motif lies at 100 to 104 (SGLPA). Residues 130 to 132 (HRL) carry the Latch loop motif.

The protein belongs to the PYR/PYL/RCAR abscisic acid intracellular receptor family. As to quaternary structure, homodimer. Interacts with PP2C06. Interacts with PP2C50. Binding to PP2C50 is dependent on the presence of abscisic acid (ABA). Interacts with PP2C30 and PP2C53. Binding to PP2C30 and PP2C53 is dependent on the presence of ABA.

Its subcellular location is the cytoplasm. The protein resides in the cytosol. It localises to the nucleus. Its function is as follows. Involved in abscisic acid (ABA) signaling during seed germination and abiotic stress response. Acts as a positive regulator of ABA-mediated inhibition of seed germination, and tolerance to drought and cold stresses. Inhibits the activity of the protein phosphatases PP2C06 and PP2C09 when activated by abscisic acid (ABA). The polypeptide is Abscisic acid receptor PYL9 (Oryza sativa subsp. japonica (Rice)).